A 368-amino-acid chain; its full sequence is Cytochrome-c peroxidase IdrP2 (368 aa).

The first 27 residues, 1-27 (MKWHRGRLTQTLGAMGLTATLTVAAQA), serve as a signal peptide directing secretion. Cytochrome c domains are found at residues 48–158 (AMIE…ALWQ) and 201–346 (KEAQ…LTLS). Positions 70, 73, 74, 216, 219, and 220 each coordinate heme c.

The iodate reductase (Idr) complex is composed of a molybdopterin-dependent iodate reductase (IdrA and IdrB subunits) and two associated peroxidases (IdrP1 and IdrP2). Heme c is required as a cofactor.

It is found in the periplasm. It carries out the reaction 2 Fe(II)-[cytochrome c] + H2O2 + 2 H(+) = 2 Fe(III)-[cytochrome c] + 2 H2O. Functionally, involved in iodate respiration. Probably reduces the H(2)O(2) produced by IdrA/IdrB to H(2)O, using a reduced cytochrome c as the electron donor. The protein is Cytochrome-c peroxidase IdrP2 of Pseudomonas sp. (strain SCT).